Here is a 352-residue protein sequence, read N- to C-terminus: Protein O-mannose kinase (352 aa).

The Cytoplasmic portion of the chain corresponds to Met-1–Cys-16. A helical; Signal-anchor for type II membrane protein transmembrane segment spans residues Leu-17–Met-37. Residues Tyr-38–Leu-352 are Lumenal-facing. The region spanning Val-82–Leu-352 is the Protein kinase domain.

Belongs to the protein kinase superfamily. Ser/Thr protein kinase family. STKL subfamily.

It localises to the endoplasmic reticulum membrane. It catalyses the reaction 3-O-[beta-D-GalNAc-(1-&gt;3)-beta-D-GlcNAc-(1-&gt;4)-alpha-D-Man]-L-Thr-[protein] + ATP = 3-O-[beta-D-GalNAc-(1-&gt;3)-beta-D-GlcNAc-(1-&gt;4)-(O-6-P-alpha-D-Man)]-Thr-[protein] + ADP + H(+). Protein O-mannose kinase that specifically mediates phosphorylation at the 6-position of an O-mannose of the trisaccharide (N-acetylgalactosamine (GalNAc)-beta-1,3-N-acetylglucosamine (GlcNAc)-beta-1,4-mannose) to generate phosphorylated O-mannosyl trisaccharide (N-acetylgalactosamine-beta-1,3-N-acetylglucosamine-beta-1,4-(phosphate-6-)mannose). Phosphorylated O-mannosyl trisaccharide is a carbohydrate structure present in alpha-dystroglycan (dag1), which is required for binding laminin G-like domain-containing extracellular proteins with high affinity. Only shows kinase activity when the GalNAc-beta-3-GlcNAc-beta-terminus is linked to the 4-position of O-mannose, suggesting that this disaccharide serves as the substrate recognition motif. The protein is Protein O-mannose kinase (pomk) of Xenopus laevis (African clawed frog).